The sequence spans 243 residues: MTDNLQDLISTKLAAAIANPLFPAVDSQLRAGRHISLDQLDNHAFLMDFQGELDSFYRRYNVELIRAPEGFFYLRPKATTLIARSVLTELEMLVGKVLCYLYLSPERLAQQGIFSTQEVYDELLNLADENKLLKAVNQRSSGSDLDKQKLAEKVRAALNRLRRLGMIHGVGEQNSGKFTIAEAVFRFGAEVRAGDDPREAQLRLIRDGEAATPDSLALEKQADLNEVDDNDELEDELDDEEHA.

Residues 214–243 (DSLALEKQADLNEVDDNDELEDELDDEEHA) form a disordered region. Residues 225–243 (NEVDDNDELEDELDDEEHA) show a composition bias toward acidic residues.

Belongs to the MukE family. In terms of assembly, interacts, and probably forms a ternary complex, with MukF and MukB. The complex formation is stimulated by calcium or magnesium.

It localises to the cytoplasm. The protein localises to the nucleoid. Functionally, involved in chromosome condensation, segregation and cell cycle progression. May participate in facilitating chromosome segregation by condensation DNA from both sides of a centrally located replisome during cell division. Probably acts via its interaction with MukB and MukF. The sequence is that of Chromosome partition protein MukE from Pasteurella multocida (strain Pm70).